The chain runs to 494 residues: Aspartyl/glutamyl-tRNA(Asn/Gln) amidotransferase subunit B (494 aa).

This sequence belongs to the GatB/GatE family. GatB subfamily. As to quaternary structure, heterotrimer of A, B and C subunits.

It carries out the reaction L-glutamyl-tRNA(Gln) + L-glutamine + ATP + H2O = L-glutaminyl-tRNA(Gln) + L-glutamate + ADP + phosphate + H(+). The catalysed reaction is L-aspartyl-tRNA(Asn) + L-glutamine + ATP + H2O = L-asparaginyl-tRNA(Asn) + L-glutamate + ADP + phosphate + 2 H(+). Its function is as follows. Allows the formation of correctly charged Asn-tRNA(Asn) or Gln-tRNA(Gln) through the transamidation of misacylated Asp-tRNA(Asn) or Glu-tRNA(Gln) in organisms which lack either or both of asparaginyl-tRNA or glutaminyl-tRNA synthetases. The reaction takes place in the presence of glutamine and ATP through an activated phospho-Asp-tRNA(Asn) or phospho-Glu-tRNA(Gln). This chain is Aspartyl/glutamyl-tRNA(Asn/Gln) amidotransferase subunit B, found in Synechococcus sp. (strain CC9902).